Here is an 83-residue protein sequence, read N- to C-terminus: Large ribosomal subunit protein bL31B (83 aa).

Belongs to the bacterial ribosomal protein bL31 family. Type B subfamily. Part of the 50S ribosomal subunit.

The chain is Large ribosomal subunit protein bL31B from Lactobacillus gasseri (strain ATCC 33323 / DSM 20243 / BCRC 14619 / CIP 102991 / JCM 1131 / KCTC 3163 / NCIMB 11718 / NCTC 13722 / AM63).